Reading from the N-terminus, the 555-residue chain is Putative ankyrin repeat protein L283 (555 aa).

4 ANK repeats span residues 364–389 (TKVN…EDDI), 390–420 (VFKK…DINE), 422–447 (IKLA…KVRC), and 455–488 (GYLE…EGGK).

This Acanthamoeba polyphaga mimivirus (APMV) protein is Putative ankyrin repeat protein L283.